Consider the following 555-residue polypeptide: Phosphoglucomutase (555 aa).

The alpha-D-glucose 1,6-bisphosphate site is built by Arg-22 and Ser-114. Ser-114 functions as the Phosphoserine intermediate in the catalytic mechanism. Mg(2+) contacts are provided by Ser-114, Asp-279, Asp-281, and Asp-283. Ser-114 bears the Phosphoserine mark. Positions 283, 284, 347, 366, 368, and 379 each coordinate alpha-D-glucose 1,6-bisphosphate.

The protein belongs to the phosphohexose mutase family. Monomer. Mg(2+) serves as cofactor.

It localises to the cytoplasm. The enzyme catalyses alpha-D-glucose 1-phosphate = alpha-D-glucose 6-phosphate. It catalyses the reaction O-phospho-L-seryl-[protein] + alpha-D-glucose 1-phosphate = alpha-D-glucose 1,6-bisphosphate + L-seryl-[protein]. The catalysed reaction is alpha-D-glucose 1,6-bisphosphate + L-seryl-[protein] = O-phospho-L-seryl-[protein] + alpha-D-glucose 6-phosphate. Its function is as follows. Catalyzes the reversible isomerization of alpha-D-glucose 1-phosphate to alpha-D-glucose 6-phosphate. The mechanism proceeds via the intermediate compound alpha-D-glucose 1,6-bisphosphate. Key enzyme in hexose metabolism. The reverse reaction is an essential step for biosynthesis because glucose 1-phosphate is the starting point for the synthesis of UDP-glucose, which acts as a precursor for the synthesis of oligosaccharides and trehalose. This Aspergillus oryzae (strain ATCC 42149 / RIB 40) (Yellow koji mold) protein is Phosphoglucomutase (pgmA).